A 511-amino-acid polypeptide reads, in one-letter code: 2-isopropylmalate synthase (511 aa).

In terms of domain architecture, Pyruvate carboxyltransferase spans 4 to 266 (IDIFDTTLRD…ETGIQLQEIK (263 aa)). 4 residues coordinate Mn(2+): Asp-13, His-201, His-203, and Asn-237. Residues 392–511 (ELKMVQVQYG…IKESLRAHPV (120 aa)) form a regulatory domain region.

The protein belongs to the alpha-IPM synthase/homocitrate synthase family. LeuA type 1 subfamily. As to quaternary structure, homodimer. The cofactor is Mn(2+).

It is found in the cytoplasm. The catalysed reaction is 3-methyl-2-oxobutanoate + acetyl-CoA + H2O = (2S)-2-isopropylmalate + CoA + H(+). It participates in amino-acid biosynthesis; L-leucine biosynthesis; L-leucine from 3-methyl-2-oxobutanoate: step 1/4. Its function is as follows. Catalyzes the condensation of the acetyl group of acetyl-CoA with 3-methyl-2-oxobutanoate (2-ketoisovalerate) to form 3-carboxy-3-hydroxy-4-methylpentanoate (2-isopropylmalate). The sequence is that of 2-isopropylmalate synthase from Lysinibacillus sphaericus (strain C3-41).